The primary structure comprises 466 residues: Ribosomal protein uS12 methylthiotransferase RimO (466 aa).

Residues Pro18–Pro133 form the MTTase N-terminal domain. 6 residues coordinate [4Fe-4S] cluster: Cys27, Cys63, Cys92, Cys164, Cys168, and Cys171. One can recognise a Radical SAM core domain in the interval Leu150 to Ala391. A TRAM domain is found at Gln394–Ile466.

The protein belongs to the methylthiotransferase family. RimO subfamily. It depends on [4Fe-4S] cluster as a cofactor.

It localises to the cytoplasm. The catalysed reaction is L-aspartate(89)-[ribosomal protein uS12]-hydrogen + (sulfur carrier)-SH + AH2 + 2 S-adenosyl-L-methionine = 3-methylsulfanyl-L-aspartate(89)-[ribosomal protein uS12]-hydrogen + (sulfur carrier)-H + 5'-deoxyadenosine + L-methionine + A + S-adenosyl-L-homocysteine + 2 H(+). Functionally, catalyzes the methylthiolation of an aspartic acid residue of ribosomal protein uS12. The polypeptide is Ribosomal protein uS12 methylthiotransferase RimO (Leptothrix cholodnii (strain ATCC 51168 / LMG 8142 / SP-6) (Leptothrix discophora (strain SP-6))).